Here is a 145-residue protein sequence, read N- to C-terminus: Ribosome maturation factor RimP (145 aa).

It belongs to the RimP family.

The protein localises to the cytoplasm. Its function is as follows. Required for maturation of 30S ribosomal subunits. This chain is Ribosome maturation factor RimP, found in Borrelia garinii subsp. bavariensis (strain ATCC BAA-2496 / DSM 23469 / PBi) (Borreliella bavariensis).